The chain runs to 1118 residues: Sodium-driven chloride bicarbonate exchanger (1118 aa).

Disordered regions lie at residues 1-23 (MEIKDQGAQMEPLLPTRNDEEAV), 58-96 (GRKSHRRHRHRGHKHRKRDRERDSGLEDGRESPSFDTPS), 245-312 (KQSE…PPHQ), and 457-476 (NGTAAHGEAEPHGGHSGPEL). Residues 1-509 (MEIKDQGAQM…DFRDAFSLQC (509 aa)) are Cytoplasmic-facing. Residues 59-76 (RKSHRRHRHRGHKHRKRD) are compositionally biased toward basic residues. The span at 77–90 (RERDSGLEDGRESP) shows a compositional bias: basic and acidic residues. S89 bears the Phosphoserine mark. Residue T94 is modified to Phosphothreonine. The span at 248–264 (EPNSMDKNAGQVVSPQS) shows a compositional bias: polar residues. The residue at position 276 (S276) is a Phosphoserine. Residues 510–530 (LASFLFLYCACMSPVITFGGL) form a helical membrane-spanning segment. The Extracellular segment spans residues 531-538 (LGEATEGR). Residues 539-559 (ISAIESLFGASMTGIAYSLFG) traverse the membrane as a helical segment. Residues 560–562 (GQP) lie on the Cytoplasmic side of the membrane. The chain crosses the membrane as a helical span at residues 563 to 583 (LTILGSTGPVLVFEKILFKFC). The Extracellular segment spans residues 584-596 (KEYGLSYLSLRAS). Residues 597–617 (IGLWTATLCIILVATDASSLV) traverse the membrane as a helical segment. Over 618-626 (CYITRFTEE) the chain is Cytoplasmic. The helical transmembrane segment at 627-647 (AFASLICIIFIYEALEKLFEL) threads the bilayer. The Extracellular portion of the chain corresponds to 648–720 (SEAYPINMHN…VGRACGHDHP (73 aa)). 4 N-linked (GlcNAc...) asparagine glycosylation sites follow: N674, N677, N687, and N697. Residues 721 to 741 (YVPDVLFWSVILFFSTVTLSA) form a helical membrane-spanning segment. Residues 742–762 (TLKQFKTSRYFPTKVRSIVSD) lie on the Cytoplasmic side of the membrane. A helical transmembrane segment spans residues 763–783 (FAVFLTILCMVLIDYAIGIPS). Residues 784 to 809 (PKLQVPSVFKPTRDDRGWFVTPLGPN) are Extracellular-facing. The helical transmembrane segment at 810-830 (PWWTVIAAIIPALLCTILIFM) threads the bilayer. The Cytoplasmic portion of the chain corresponds to 831-855 (DQQITAVIINRKEHKLKKGCGYHLD). Residues 856–876 (LLMVAVMLGVCSIMGLPWFVA) form a helical membrane-spanning segment. The Extracellular segment spans residues 877 to 912 (ATVLSITHVNSLKLESECSAPGEQPKFLGIREQRVT). The helical transmembrane segment at 913–933 (GLMIFILMGSSVFMTSILKFI) threads the bilayer. Residues 934-935 (PM) lie on the Cytoplasmic side of the membrane. A helical transmembrane segment spans residues 936-956 (PVLYGVFLYMGASSLKGIQFF). The Extracellular segment spans residues 957-998 (DRIKLFWMPAKHQPDFIYLRHVPLRKVHLFTIIQMSCLGLLW). Residues 999–1019 (IIKVSRAAIVFPMMVLALVFV) form a helical membrane-spanning segment. Residues 1020–1118 (RKLMDLLFTK…SSFPSKSSPS (99 aa)) are Cytoplasmic-facing. 2 positions are modified to phosphoserine: S1057 and S1085.

The protein belongs to the anion exchanger (TC 2.A.31) family. In terms of tissue distribution, predominantly expressed in the brain.

It localises to the basolateral cell membrane. It is found in the apical cell membrane. Its subcellular location is the cell projection. The protein localises to the dendrite. The protein resides in the axon. It localises to the perikaryon. It is found in the presynapse. Its subcellular location is the postsynapse. The enzyme catalyses 2 hydrogencarbonate(out) + chloride(in) + Na(+)(out) = 2 hydrogencarbonate(in) + chloride(out) + Na(+)(in). Sodium/bicarbonate cotransporter which plays an important role in regulating intracellular pH. Has been shown to act as a sodium/bicarbonate cotransporter in exchange for intracellular chloride. Has also been shown to act as a sodium/biocarbonate cotransporter which does not couple net influx of bicarbonate to net efflux of chloride, with the observed chloride efflux being due to chloride self-exchange. Controls neuronal pH and may contribute to the secretion of cerebrospinal fluid. Acting on presynaptic intracellular pH, it promotes GABA release, reduces the excitability of CA1 pyramidal neurons, and modulates short-term synaptic plasticity. Required in retinal cells to maintain normal pH which is necessary for normal vision. In the kidney, likely to mediate bicarbonate reclamation in the apical membrane of the proximal tubules. The protein is Sodium-driven chloride bicarbonate exchanger of Homo sapiens (Human).